The chain runs to 120 residues: Large ribosomal subunit protein uL18 (120 aa).

The protein belongs to the universal ribosomal protein uL18 family. Part of the 50S ribosomal subunit; part of the 5S rRNA/L5/L18/L25 subcomplex. Contacts the 5S and 23S rRNAs.

Its function is as follows. This is one of the proteins that bind and probably mediate the attachment of the 5S RNA into the large ribosomal subunit, where it forms part of the central protuberance. This is Large ribosomal subunit protein uL18 from Ehrlichia ruminantium (strain Gardel).